The primary structure comprises 484 residues: NADH-quinone oxidoreductase subunit N (484 aa).

The next 13 membrane-spanning stretches (helical) occupy residues 10 to 30 (LALP…VDLF), 40 to 60 (FYLT…TQWG), 74 to 94 (SLGA…LAYT), 108 to 128 (FYLL…GGSL), 129 to 149 (LSLY…VAYH), 163 to 183 (FVLG…VYGA), 203 to 223 (LMLL…LGAA), 237 to 257 (PTPV…ALFM), 272 to 292 (EPML…IAIV), 299 to 319 (MLAY…TAGT), 327 to 347 (LFYT…ITVL), 370 to 390 (YAGV…TVGF), and 404 to 424 (GHIP…FYYL).

Belongs to the complex I subunit 2 family. As to quaternary structure, NDH-1 is composed of 14 different subunits. Subunits NuoA, H, J, K, L, M, N constitute the membrane sector of the complex.

It is found in the cell inner membrane. The catalysed reaction is a quinone + NADH + 5 H(+)(in) = a quinol + NAD(+) + 4 H(+)(out). NDH-1 shuttles electrons from NADH, via FMN and iron-sulfur (Fe-S) centers, to quinones in the respiratory chain. The immediate electron acceptor for the enzyme in this species is believed to be ubiquinone. Couples the redox reaction to proton translocation (for every two electrons transferred, four hydrogen ions are translocated across the cytoplasmic membrane), and thus conserves the redox energy in a proton gradient. The protein is NADH-quinone oxidoreductase subunit N of Halorhodospira halophila (strain DSM 244 / SL1) (Ectothiorhodospira halophila (strain DSM 244 / SL1)).